The sequence spans 219 residues: Maleylacetoacetate isomerase (219 aa).

One can recognise a GST N-terminal domain in the interval 4 to 87; sequence NKTVLYSYWR…YLEETHPENP (84 aa). Residues 14 to 19, Gln45, 71 to 72, Gln111, and 115 to 117 each bind glutathione; these read SSCSWR, QS, and NLK. The 126-residue stretch at 92–217 folds into the GST C-terminal domain; sequence GSYERAIARQ…LPQNQPDAEP (126 aa).

This sequence belongs to the GST superfamily. Zeta family. The cofactor is glutathione.

The enzyme catalyses 4-maleylacetoacetate = 4-fumarylacetoacetate. It participates in amino-acid degradation; L-phenylalanine degradation; acetoacetate and fumarate from L-phenylalanine: step 5/6. The chain is Maleylacetoacetate isomerase (mai) from Dictyostelium discoideum (Social amoeba).